Consider the following 1025-residue polypeptide: Myosin phosphatase Rho-interacting protein (1025 aa).

The interaction with F-actin stretch occupies residues 2–383; sequence SAAKENPCRK…DRRSTEPSVT (382 aa). One can recognise a PH 1 domain in the interval 43 to 150; sequence KPIYGGWLLL…WLEMLMVYPR (108 aa). Disordered stretches follow at residues 152–302 and 317–383; these read NKQN…RRSQ and HMET…PSVT. Low complexity predominate over residues 179 to 189; sequence SSSSSSSSSSS. Phosphoserine occurs at positions 192, 217, 218, 220, 224, and 226. Residues 217 to 236 show a composition bias toward low complexity; sequence SSLSPAQSPSQSQPPAASSL. Positions 239 to 263 are enriched in basic and acidic residues; that stretch reads PGLESKEEESAMSSDRMDCGRKVRV. Phosphoserine is present on residues serine 265 and serine 269. Positions 271–281 are enriched in basic and acidic residues; sequence EKTKQDLKAEE. Positions 284–294 are enriched in pro residues; the sequence is LPPPLSPPSPS. Phosphoserine occurs at positions 289 and 292. Threonine 295 carries the phosphothreonine modification. Residue serine 326 is modified to Phosphoserine. A compositionally biased stretch (basic and acidic residues) spans 332-348; sequence RQGRSEKRAFPRKRDFT. Position 348 is a phosphothreonine (threonine 348). A phosphoserine mark is found at serine 362 and serine 365. Positions 387–483 constitute a PH 2 domain; the sequence is LNFKKGWLTK…WIQTIMKHVH (97 aa). Disordered regions lie at residues 485–545 and 560–591; these read TTAP…TFDW and VGGV…RREE. Serine 493 is subject to Phosphoserine. 2 stretches are compositionally biased toward basic and acidic residues: residues 524–545 and 567–589; these read PEQK…TFDW and DTHE…ARRR. The tract at residues 546–824 is interaction with RHOA; that stretch reads AEFRPIQQAL…SVQRELEVLS (279 aa). Serine 619 is subject to Phosphoserine. Residue threonine 646 is modified to Phosphothreonine. Residues serine 663 and serine 800 each carry the phosphoserine modification. A coiled-coil region spans residues 673–977; sequence HELTSLLEKE…AATEALGEKS (305 aa). An interaction with PPP1R12A region spans residues 824–879; it reads SEQYSQKCLENAHLAQALEAERQALRQCQRENQELNAHNQELNNRLAAEITRLRTL. Serine 891, serine 977, serine 993, serine 1014, and serine 1016 each carry phosphoserine.

As to quaternary structure, binds F-actin through its N-terminus. Interacts with MYZAP. Binds RHOA, PPP1R12A/MBS and PPP1R12C/MBS85 through adjacent coiled coil domains.

The protein resides in the cytoplasm. It localises to the cytoskeleton. Targets myosin phosphatase to the actin cytoskeleton. Required for the regulation of the actin cytoskeleton by RhoA and ROCK1. Depletion leads to an increased number of stress fibers in smooth muscle cells through stabilization of actin fibers by phosphorylated myosin. Overexpression of MRIP as well as its F-actin-binding region leads to disassembly of stress fibers in neuronal cells. The sequence is that of Myosin phosphatase Rho-interacting protein (MPRIP) from Homo sapiens (Human).